The chain runs to 495 residues: Sialin (495 aa).

The segment at 1–24 (MKSPVSDLAPSDGEEGSDRTPLLQ) is disordered. Ser3 carries the post-translational modification Phosphoserine. The Dileucine internalization motif signature appears at 22–23 (LL). The helical transmembrane segment at 42 to 62 (LAFLSFFGFFVLYSLRVNLSV) threads the bilayer. N-linked (GlcNAc...) asparagine glycosylation is found at Asn71, Asn77, and Asn95. The next 11 helical transmembrane spans lie at 110–130 (WILG…GYVA), 137–157 (LLLG…PLAA), 159–179 (FGVG…GVTY), 201–221 (ISYA…GVIC), 228–248 (YVFY…ICLV), 289–309 (LPLW…YTLL), 329–349 (FLSA…GQAA), 366–386 (VFSL…GFIG), 392–412 (AVAF…GFSI), 424–444 (ILLG…PIIA), and 458–478 (TVFC…TLFA).

Belongs to the major facilitator superfamily. Sodium/anion cotransporter family. In terms of tissue distribution, significantly expressed in lung endothelial cells, and much less in liver.

Its subcellular location is the basolateral cell membrane. The protein localises to the cytoplasmic vesicle. The protein resides in the secretory vesicle. It is found in the synaptic vesicle membrane. It localises to the lysosome membrane. It catalyses the reaction N-acetylneuraminate(in) + H(+)(in) = N-acetylneuraminate(out) + H(+)(out). The catalysed reaction is D-glucuronate(out) + H(+)(out) = D-glucuronate(in) + H(+)(in). The enzyme catalyses 2 nitrate(out) + H(+)(out) = 2 nitrate(in) + H(+)(in). It carries out the reaction L-aspartate(out) = L-aspartate(in). It catalyses the reaction L-glutamate(out) = L-glutamate(in). The catalysed reaction is N-acetyl-L-aspartyl-L-glutamate(out) = N-acetyl-L-aspartyl-L-glutamate(in). Its function is as follows. Multifunctional anion transporter that operates via two distinct transport mechanisms, namely proton-coupled anion cotransport and membrane potential-dependent anion transport. Electroneutral proton-coupled acidic monosaccharide symporter, with a sugar to proton stoichiometry of 1:1. Exports glucuronic acid and free sialic acid derived from sialoglycoconjugate degradation out of lysosomes, driven by outwardly directed lysosomal pH gradient. May regulate lysosome function and metabolism of sialylated conjugates that impact oligodendrocyte lineage differentiation and myelinogenesis in the central nervous system. Electrogenic proton-coupled nitrate symporter that transports nitrate ions across the basolateral membrane of salivary gland acinar cells, with nitrate to proton stoichiometry of 2:1. May contribute to nitrate clearance from serum by salivary glands, where it is further concentrated and secreted in the saliva. Uses membrane potential to drive the uptake of acidic amino acids and peptides into synaptic vesicles. Responsible for synaptic vesicular storage of L-aspartate and L-glutamate in pinealocytes as well as vesicular uptake of N-acetyl-L-aspartyl-L-glutamate neuropeptide, relevant to aspartegic-associated glutamatergic neurotransmission and activation of metabotropic receptors that inhibit subsequent transmitter release. Receptor for CM101, a polysaccharide produced by group B Streptococcus with antipathoangiogenic properties. This chain is Sialin (SLC17A5), found in Ovis aries (Sheep).